Consider the following 263-residue polypeptide: Aminoglycoside 3'-phosphotransferase (263 aa).

Residue Asp-189 is the Proton acceptor of the active site.

Belongs to the aminoglycoside phosphotransferase family.

The catalysed reaction is kanamycin A + ATP = kanamycin 3'-phosphate + ADP + H(+). Functionally, resistance to kanamycin and structurally-related aminoglycosides, including amikacin. This chain is Aminoglycoside 3'-phosphotransferase (aphA), found in Staphylococcus aureus.